We begin with the raw amino-acid sequence, 320 residues long: Coproporphyrin III ferrochelatase (320 aa).

2 residues coordinate Fe(2+): His194 and Glu273.

The protein belongs to the ferrochelatase family.

It localises to the cytoplasm. It catalyses the reaction Fe-coproporphyrin III + 2 H(+) = coproporphyrin III + Fe(2+). It participates in porphyrin-containing compound metabolism; protoheme biosynthesis. Functionally, involved in coproporphyrin-dependent heme b biosynthesis. Catalyzes the insertion of ferrous iron into coproporphyrin III to form Fe-coproporphyrin III. This is Coproporphyrin III ferrochelatase from Symbiobacterium thermophilum (strain DSM 24528 / JCM 14929 / IAM 14863 / T).